Consider the following 363-residue polypeptide: Cell division cycle-associated protein 3 (363 aa).

Positions 1–12 are enriched in polar residues; the sequence is MGSAESKAQVTP. Disordered stretches follow at residues 1–81, 126–152, 191–210, and 231–363; these read MGSA…TPLR, VESQ…KAET, MNDQ…EESP, and ENLN…HSNS. The tract at residues 93-152 is F-box-like; the sequence is KQLSEVFVAEDSSTEGGPLGFTGPEATNLERQVVESQTAPPAGEHVNDHEVEPSVEKAET. Basic and acidic residues predominate over residues 137–152; sequence HVNDHEVEPSVEKAET. Residues 192 to 210 show a composition bias toward acidic residues; the sequence is NDQEESPIAETMNDQEESP. A compositionally biased stretch (polar residues) spans 259-285; sequence SVVSTESTQATGQQQKTRGKSPRSSGV. Positions 296–308 are enriched in low complexity; it reads LLSSSSGRSPLRI. Polar residues predominate over residues 311–321; it reads EDNSPNTNTQH. The KEN box signature appears at 353–355; it reads KEN.

In terms of assembly, interacts with wee1, when wee1 is phosphorylated at 'Ser-38'. Phosphorylated. Post-translationally, ubiquitinated and degraded by the APC/C-Cdh1 complex during G1 phase.

The protein resides in the cytoplasm. It is found in the cytosol. The protein operates within protein modification; protein ubiquitination. In terms of biological role, F-box-like protein which is required for entry into mitosis. Acts by participating in E3 ligase complexes that mediate the ubiquitination and degradation of WEE1 kinase at G2/M phase. This chain is Cell division cycle-associated protein 3 (cdca3), found in Xenopus laevis (African clawed frog).